A 404-amino-acid chain; its full sequence is Cysteine desulfurase IscS (404 aa).

Pyridoxal 5'-phosphate-binding positions include 75 to 76 (AT), asparagine 155, glutamine 183, and 203 to 205 (SAH). Lysine 206 bears the N6-(pyridoxal phosphate)lysine mark. Threonine 243 is a binding site for pyridoxal 5'-phosphate. Cysteine 328 (cysteine persulfide intermediate) is an active-site residue. Cysteine 328 is a binding site for [2Fe-2S] cluster.

Belongs to the class-V pyridoxal-phosphate-dependent aminotransferase family. NifS/IscS subfamily. Homodimer. Forms a heterotetramer with IscU, interacts with other sulfur acceptors. It depends on pyridoxal 5'-phosphate as a cofactor.

The protein localises to the cytoplasm. It catalyses the reaction (sulfur carrier)-H + L-cysteine = (sulfur carrier)-SH + L-alanine. It functions in the pathway cofactor biosynthesis; iron-sulfur cluster biosynthesis. In terms of biological role, master enzyme that delivers sulfur to a number of partners involved in Fe-S cluster assembly, tRNA modification or cofactor biosynthesis. Catalyzes the removal of elemental sulfur atoms from cysteine to produce alanine. Functions as a sulfur delivery protein for Fe-S cluster synthesis onto IscU, an Fe-S scaffold assembly protein, as well as other S acceptor proteins. This chain is Cysteine desulfurase IscS, found in Shewanella loihica (strain ATCC BAA-1088 / PV-4).